The following is a 92-amino-acid chain: UPF0237 protein MA_3235 (92 aa).

Positions 7–81 constitute an ACT domain; the sequence is IITVIGSDRV…KSLGVEVKVQ (75 aa).

It belongs to the UPF0237 family.

The polypeptide is UPF0237 protein MA_3235 (Methanosarcina acetivorans (strain ATCC 35395 / DSM 2834 / JCM 12185 / C2A)).